Here is a 283-residue protein sequence, read N- to C-terminus: Protein/nucleic acid deglycase HchA (283 aa).

Zn(2+) contacts are provided by His86, Glu91, and His123. Catalysis depends on Cys185, which acts as the Nucleophile.

This sequence belongs to the peptidase C56 family. HchA subfamily. Homodimer.

Its subcellular location is the cytoplasm. The enzyme catalyses N(omega)-(1-hydroxy-2-oxopropyl)-L-arginyl-[protein] + H2O = lactate + L-arginyl-[protein] + H(+). It carries out the reaction N(6)-(1-hydroxy-2-oxopropyl)-L-lysyl-[protein] + H2O = lactate + L-lysyl-[protein] + H(+). The catalysed reaction is S-(1-hydroxy-2-oxopropyl)-L-cysteinyl-[protein] + H2O = lactate + L-cysteinyl-[protein] + H(+). It catalyses the reaction N(omega)-(1-hydroxy-2-oxoethyl)-L-arginyl-[protein] + H2O = L-arginyl-[protein] + glycolate + H(+). The enzyme catalyses N(6)-(1-hydroxy-2-oxoethyl)-L-lysyl-[protein] + H2O = glycolate + L-lysyl-[protein] + H(+). It carries out the reaction S-(1-hydroxy-2-oxoethyl)-L-cysteinyl-[protein] + H2O = glycolate + L-cysteinyl-[protein] + H(+). The catalysed reaction is N(2)-(1-hydroxy-2-oxopropyl)-dGTP + H2O = lactate + dGTP + H(+). It catalyses the reaction N(2)-(1-hydroxy-2-oxopropyl)-GTP + H2O = lactate + GTP + H(+). The enzyme catalyses N(2)-(1-hydroxy-2-oxopropyl)-GDP + H2O = lactate + GDP + H(+). It carries out the reaction N(2)-(1-hydroxy-2-oxopropyl)-GMP + H2O = lactate + GMP + H(+). The catalysed reaction is N(2)-(1-hydroxy-2-oxoethyl)-dGTP + H2O = dGTP + glycolate + H(+). It catalyses the reaction N(2)-(1-hydroxy-2-oxoethyl)-GTP + H2O = glycolate + GTP + H(+). The enzyme catalyses N(2)-(1-hydroxy-2-oxoethyl)-GDP + H2O = glycolate + GDP + H(+). It carries out the reaction N(2)-(1-hydroxy-2-oxoethyl)-GMP + H2O = glycolate + GMP + H(+). The catalysed reaction is an N(2)-(1-hydroxy-2-oxopropyl)-guanosine in RNA + H2O = a guanosine in RNA + lactate + H(+). It catalyses the reaction an N(2)-(1-hydroxy-2-oxopropyl)-2'-deoxyguanosine in DNA + H2O = a 2'-deoxyguanosine in DNA + lactate + H(+). The enzyme catalyses an N(2)-(1-hydroxy-2-oxoethyl)-guanosine in RNA + H2O = a guanosine in RNA + glycolate + H(+). It carries out the reaction an N(2)-(1-hydroxy-2-oxoethyl)-2'-deoxyguanosine in DNA + H2O = a 2'-deoxyguanosine in DNA + glycolate + H(+). Its function is as follows. Protein and nucleotide deglycase that catalyzes the deglycation of the Maillard adducts formed between amino groups of proteins or nucleotides and reactive carbonyl groups of glyoxals. Thus, functions as a protein deglycase that repairs methylglyoxal- and glyoxal-glycated proteins, and releases repaired proteins and lactate or glycolate, respectively. Deglycates cysteine, arginine and lysine residues in proteins, and thus reactivates these proteins by reversing glycation by glyoxals. Acts on early glycation intermediates (hemithioacetals and aminocarbinols), preventing the formation of Schiff bases and advanced glycation endproducts (AGE). Also functions as a nucleotide deglycase able to repair glycated guanine in the free nucleotide pool (GTP, GDP, GMP, dGTP) and in DNA and RNA. Is thus involved in a major nucleotide repair system named guanine glycation repair (GG repair), dedicated to reversing methylglyoxal and glyoxal damage via nucleotide sanitization and direct nucleic acid repair. Plays an important role in protecting cells from carbonyl stress. This chain is Protein/nucleic acid deglycase HchA, found in Escherichia coli (strain K12 / MC4100 / BW2952).